The chain runs to 176 residues: Xanthine-guanine phosphoribosyltransferase (176 aa).

Residues 51–52 (RG), Arg88, and 111–119 (DDLVDSGKT) each bind 5-phospho-alpha-D-ribose 1-diphosphate. Position 88 (Arg88) interacts with GMP. Asp112 is a Mg(2+) binding site. Residues Asp115 and Ile158 each coordinate guanine. Xanthine-binding residues include Asp115 and Ile158. Residues 115–119 (DSGKT) and 157–158 (WI) each bind GMP.

Belongs to the purine/pyrimidine phosphoribosyltransferase family. XGPT subfamily. Homotetramer. Mg(2+) serves as cofactor.

The protein resides in the cell inner membrane. The catalysed reaction is GMP + diphosphate = guanine + 5-phospho-alpha-D-ribose 1-diphosphate. It catalyses the reaction XMP + diphosphate = xanthine + 5-phospho-alpha-D-ribose 1-diphosphate. It carries out the reaction IMP + diphosphate = hypoxanthine + 5-phospho-alpha-D-ribose 1-diphosphate. It participates in purine metabolism; GMP biosynthesis via salvage pathway; GMP from guanine: step 1/1. It functions in the pathway purine metabolism; XMP biosynthesis via salvage pathway; XMP from xanthine: step 1/1. Functionally, purine salvage pathway enzyme that catalyzes the transfer of the ribosyl-5-phosphate group from 5-phospho-alpha-D-ribose 1-diphosphate (PRPP) to the N9 position of the 6-oxopurines guanine and xanthine to form the corresponding ribonucleotides GMP (guanosine 5'-monophosphate) and XMP (xanthosine 5'-monophosphate), with the release of PPi. To a lesser extent, also acts on hypoxanthine. The sequence is that of Xanthine-guanine phosphoribosyltransferase from Ruegeria sp. (strain TM1040) (Silicibacter sp.).